The primary structure comprises 489 residues: Cytochrome P450 2C41 (489 aa).

Residue Cys-434 coordinates heme.

The protein belongs to the cytochrome P450 family. Heme serves as cofactor.

The protein localises to the endoplasmic reticulum membrane. It is found in the microsome membrane. The catalysed reaction is an organic molecule + reduced [NADPH--hemoprotein reductase] + O2 = an alcohol + oxidized [NADPH--hemoprotein reductase] + H2O + H(+). Its function is as follows. Cytochromes P450 are a group of heme-thiolate monooxygenases. In liver microsomes, this enzyme is involved in an NADPH-dependent electron transport pathway. It oxidizes a variety of structurally unrelated compounds, including steroids, fatty acids, and xenobiotics. In Canis lupus familiaris (Dog), this protein is Cytochrome P450 2C41 (CYP2C41).